The chain runs to 307 residues: MLVKGNEILLKAHKEGYGVGAFNFVNFEMLNAIFEAGNEENSPLFIQTSEGAIKYMGIDMAVGMVKTMCERYPHIPVALHLDHGTTFESCEKAVKAGFTSVMIDASHHAFEENLELTSKVVKMAHNAGVSVEAELGRLMGIEDNISVDEKDAVLVNPKEAEQFVKESQVDYLAPAIGTSHGAFKFKGEPKLDFERLQEVKRLTNIPLVLHGASAIPDNVRKSYLDAGGDLKGSKGVPFEFLQESVKGGINKVNTDTDLRIAFIAEVRKVANEDKSQFDLRKFFSPAQLALKNVVKERMKLLGSANKI.

Residue Ser-49 participates in D-glyceraldehyde 3-phosphate binding. The Proton donor role is filled by Asp-82. Zn(2+) is bound by residues His-83, Asp-104, Glu-134, and His-180. Residue Gly-181 participates in dihydroxyacetone phosphate binding. Residue His-210 coordinates Zn(2+). Residues 211 to 213 (GAS) and 253 to 256 (NTDT) each bind dihydroxyacetone phosphate.

This sequence belongs to the class II fructose-bisphosphate aldolase family. Homodimer. The cofactor is Zn(2+).

The enzyme catalyses beta-D-fructose 1,6-bisphosphate = D-glyceraldehyde 3-phosphate + dihydroxyacetone phosphate. The protein operates within carbohydrate degradation; glycolysis; D-glyceraldehyde 3-phosphate and glycerone phosphate from D-glucose: step 4/4. Catalyzes the aldol condensation of dihydroxyacetone phosphate (DHAP or glycerone-phosphate) with glyceraldehyde 3-phosphate (G3P) to form fructose 1,6-bisphosphate (FBP) in gluconeogenesis and the reverse reaction in glycolysis. The sequence is that of Fructose-bisphosphate aldolase (fba) from Helicobacter pylori (strain ATCC 700392 / 26695) (Campylobacter pylori).